Here is a 177-residue protein sequence, read N- to C-terminus: ATP synthase subunit delta (177 aa).

It belongs to the ATPase delta chain family. F-type ATPases have 2 components, F(1) - the catalytic core - and F(0) - the membrane proton channel. F(1) has five subunits: alpha(3), beta(3), gamma(1), delta(1), epsilon(1). F(0) has three main subunits: a(1), b(2) and c(10-14). The alpha and beta chains form an alternating ring which encloses part of the gamma chain. F(1) is attached to F(0) by a central stalk formed by the gamma and epsilon chains, while a peripheral stalk is formed by the delta and b chains.

Its subcellular location is the cell inner membrane. F(1)F(0) ATP synthase produces ATP from ADP in the presence of a proton or sodium gradient. F-type ATPases consist of two structural domains, F(1) containing the extramembraneous catalytic core and F(0) containing the membrane proton channel, linked together by a central stalk and a peripheral stalk. During catalysis, ATP synthesis in the catalytic domain of F(1) is coupled via a rotary mechanism of the central stalk subunits to proton translocation. Functionally, this protein is part of the stalk that links CF(0) to CF(1). It either transmits conformational changes from CF(0) to CF(1) or is implicated in proton conduction. The sequence is that of ATP synthase subunit delta from Shewanella baltica (strain OS223).